Reading from the N-terminus, the 100-residue chain is Small ribosomal subunit protein uS14c (100 aa).

The protein belongs to the universal ribosomal protein uS14 family. In terms of assembly, part of the 30S ribosomal subunit.

It is found in the plastid. The protein localises to the chloroplast. Its function is as follows. Binds 16S rRNA, required for the assembly of 30S particles. In Lotus japonicus (Lotus corniculatus var. japonicus), this protein is Small ribosomal subunit protein uS14c.